Here is a 295-residue protein sequence, read N- to C-terminus: Protease HtpX homolog (295 aa).

2 consecutive transmembrane segments (helical) span residues Ile6 to Val26 and Leu40 to Leu60. A Zn(2+)-binding site is contributed by His148. Glu149 is an active-site residue. A Zn(2+)-binding site is contributed by His152. The next 2 membrane-spanning stretches (helical) occupy residues Leu163–Leu183 and Ile198–Phe218. Glu223 contacts Zn(2+).

This sequence belongs to the peptidase M48B family. Requires Zn(2+) as cofactor.

The protein resides in the cell inner membrane. The chain is Protease HtpX homolog from Leptospira interrogans serogroup Icterohaemorrhagiae serovar copenhageni (strain Fiocruz L1-130).